The following is a 473-amino-acid chain: Nitrogenase vanadium-iron protein alpha chain (473 aa).

Residues C49, C74, and C137 each contribute to the [8Fe-7S] cluster site. [7Fe-V-9S-C-homocitryl] cluster-binding residues include C256 and H422.

It belongs to the NifD/NifK/NifE/NifN family. As to quaternary structure, hexamer of two alpha, two beta, and two delta chains. The cofactor is [8Fe-7S] cluster. [7Fe-V-9S-C-homocitryl] cluster serves as cofactor.

The catalysed reaction is N2 + 8 reduced [2Fe-2S]-[ferredoxin] + 16 ATP + 16 H2O = H2 + 8 oxidized [2Fe-2S]-[ferredoxin] + 2 NH4(+) + 16 ADP + 16 phosphate + 6 H(+). Functionally, this vanadium-iron protein is part of the nitrogenase complex that catalyzes the key enzymatic reactions in nitrogen fixation. The sequence is that of Nitrogenase vanadium-iron protein alpha chain (vnfD) from Azotobacter chroococcum mcd 1.